The chain runs to 186 residues: Elongation factor P (186 aa).

This sequence belongs to the elongation factor P family.

The protein resides in the cytoplasm. The protein operates within protein biosynthesis; polypeptide chain elongation. Functionally, involved in peptide bond synthesis. Stimulates efficient translation and peptide-bond synthesis on native or reconstituted 70S ribosomes in vitro. Probably functions indirectly by altering the affinity of the ribosome for aminoacyl-tRNA, thus increasing their reactivity as acceptors for peptidyl transferase. The polypeptide is Elongation factor P (Shewanella piezotolerans (strain WP3 / JCM 13877)).